The sequence spans 575 residues: DNA mismatch repair protein MutL (575 aa).

This sequence belongs to the DNA mismatch repair MutL/HexB family.

In terms of biological role, this protein is involved in the repair of mismatches in DNA. It is required for dam-dependent methyl-directed DNA mismatch repair. May act as a 'molecular matchmaker', a protein that promotes the formation of a stable complex between two or more DNA-binding proteins in an ATP-dependent manner without itself being part of a final effector complex. The protein is DNA mismatch repair protein MutL of Dictyoglomus thermophilum (strain ATCC 35947 / DSM 3960 / H-6-12).